A 337-amino-acid chain; its full sequence is Inositol 2-dehydrogenase (337 aa).

Belongs to the Gfo/Idh/MocA family. As to quaternary structure, homotetramer.

The catalysed reaction is myo-inositol + NAD(+) = scyllo-inosose + NADH + H(+). Involved in the oxidation of myo-inositol (MI) to 2-keto-myo-inositol (2KMI or 2-inosose). The chain is Inositol 2-dehydrogenase from Ralstonia nicotianae (strain ATCC BAA-1114 / GMI1000) (Ralstonia solanacearum).